The following is a 500-amino-acid chain: Aspartyl/glutamyl-tRNA(Asn/Gln) amidotransferase subunit B (500 aa).

It belongs to the GatB/GatE family. GatB subfamily. In terms of assembly, heterotrimer of A, B and C subunits.

It catalyses the reaction L-glutamyl-tRNA(Gln) + L-glutamine + ATP + H2O = L-glutaminyl-tRNA(Gln) + L-glutamate + ADP + phosphate + H(+). The catalysed reaction is L-aspartyl-tRNA(Asn) + L-glutamine + ATP + H2O = L-asparaginyl-tRNA(Asn) + L-glutamate + ADP + phosphate + 2 H(+). In terms of biological role, allows the formation of correctly charged Asn-tRNA(Asn) or Gln-tRNA(Gln) through the transamidation of misacylated Asp-tRNA(Asn) or Glu-tRNA(Gln) in organisms which lack either or both of asparaginyl-tRNA or glutaminyl-tRNA synthetases. The reaction takes place in the presence of glutamine and ATP through an activated phospho-Asp-tRNA(Asn) or phospho-Glu-tRNA(Gln). This chain is Aspartyl/glutamyl-tRNA(Asn/Gln) amidotransferase subunit B, found in Clavibacter michiganensis subsp. michiganensis (strain NCPPB 382).